A 312-amino-acid polypeptide reads, in one-letter code: Ornithine carbamoyltransferase (312 aa).

Residues 57–60 (STRT), Q84, R108, and 135–138 (HPCQ) each bind carbamoyl phosphate. L-ornithine contacts are provided by residues N166, D226, and 230–231 (SM). Carbamoyl phosphate is bound by residues 265-266 (CL) and R293.

This sequence belongs to the aspartate/ornithine carbamoyltransferase superfamily. OTCase family.

The protein resides in the cytoplasm. It catalyses the reaction carbamoyl phosphate + L-ornithine = L-citrulline + phosphate + H(+). Its pathway is amino-acid biosynthesis; L-arginine biosynthesis; L-arginine from L-ornithine and carbamoyl phosphate: step 1/3. In terms of biological role, reversibly catalyzes the transfer of the carbamoyl group from carbamoyl phosphate (CP) to the N(epsilon) atom of ornithine (ORN) to produce L-citrulline. The sequence is that of Ornithine carbamoyltransferase from Brucella suis biovar 1 (strain 1330).